A 270-amino-acid chain; its full sequence is Cystinosin homolog (270 aa).

The 67-residue stretch at 9-75 (LEISYEIVGW…LYFSPVIQKQ (67 aa)) folds into the PQ-loop 1 domain. A helical membrane pass occupies residues 14-34 (EIVGWIAFASWSISFYPQLIL). An N-linked (GlcNAc...) asparagine glycan is attached at Asn-52. A run of 3 helical transmembrane segments spans residues 93-113 (VAFSIHAVVMTAVTLFQIFIY), 123-143 (LAIGIVVVVWGFAAICFFIAL), and 148-168 (WLWLISIFNSIQVFMTCVKYI). The 63-residue stretch at 151 to 213 (LISIFNSIQV…IQSIDQNSWK (63 aa)) folds into the PQ-loop 2 domain. The N-linked (GlcNAc...) asparagine glycan is linked to Asn-174. A run of 2 helical transmembrane segments spans residues 180–200 (TVGWSIGNILLDFTGGLANYL) and 223–243 (LLSLISIFFDILFMFQHYVLY). The interval 250 to 270 (KSPETGEESNEPLIDSSHEHV) is disordered.

Belongs to the cystinosin (TC 2.A.43.1) family.

The protein localises to the lysosome membrane. Its function is as follows. Thought to transport cystine out of lysosomes. This chain is Cystinosin homolog, found in Arabidopsis thaliana (Mouse-ear cress).